A 231-amino-acid chain; its full sequence is Ion-translocating oxidoreductase complex subunit E (231 aa).

Transmembrane regions (helical) follow at residues 18-38, 39-59, 63-83, 86-106, 125-145, and 182-202; these read ALVQLLGLCPLLAVTSTATNA, LGLGLATTLVLTLTNLTISTL, TPAEIRIPIYVMIIASVVSAV, LINAYAFGLYQSLGIFIPLIV, ALSALDGFSIGMGATCAMFVL, and PFLLAMLPPGAFIGLGLMLAG.

It belongs to the NqrDE/RnfAE family. In terms of assembly, the complex is composed of six subunits: RsxA, RsxB, RsxC, RsxD, RsxE and RsxG.

Its subcellular location is the cell inner membrane. Its function is as follows. Part of a membrane-bound complex that couples electron transfer with translocation of ions across the membrane. Required to maintain the reduced state of SoxR. In Escherichia coli O1:K1 / APEC, this protein is Ion-translocating oxidoreductase complex subunit E.